The primary structure comprises 156 residues: MYRIGIGQDAHYFEKGKKLYLGGEEFDIGYGLKGHSDGDALLHAITDAILGALAKTDIGTLFPDKSKENKNRNSVDFLNKALEIMYDMDYSIVNLDCNIIADKPNISSVRDKIIESLSRLLSIPKDNISIKAKTKEGYNKEDSLEVVCIALLQKMI.

2 residues coordinate a divalent metal cation: Asp-9 and His-11. 4-CDP-2-C-methyl-D-erythritol 2-phosphate is bound by residues 9 to 11 (DAH) and 35 to 36 (HS). His-43 is a binding site for a divalent metal cation. Position 57 to 59 (57 to 59 (DIG)) interacts with 4-CDP-2-C-methyl-D-erythritol 2-phosphate.

The protein belongs to the IspF family. In terms of assembly, homotrimer. A divalent metal cation serves as cofactor.

The catalysed reaction is 4-CDP-2-C-methyl-D-erythritol 2-phosphate = 2-C-methyl-D-erythritol 2,4-cyclic diphosphate + CMP. The protein operates within isoprenoid biosynthesis; isopentenyl diphosphate biosynthesis via DXP pathway; isopentenyl diphosphate from 1-deoxy-D-xylulose 5-phosphate: step 4/6. Functionally, involved in the biosynthesis of isopentenyl diphosphate (IPP) and dimethylallyl diphosphate (DMAPP), two major building blocks of isoprenoid compounds. Catalyzes the conversion of 4-diphosphocytidyl-2-C-methyl-D-erythritol 2-phosphate (CDP-ME2P) to 2-C-methyl-D-erythritol 2,4-cyclodiphosphate (ME-CPP) with a corresponding release of cytidine 5-monophosphate (CMP). The chain is 2-C-methyl-D-erythritol 2,4-cyclodiphosphate synthase from Hydrogenobaculum sp. (strain Y04AAS1).